Reading from the N-terminus, the 362-residue chain is NAD(P)H-quinone oxidoreductase subunit 1, chloroplastic (362 aa).

A run of 8 helical transmembrane segments spans residues 29–49, 103–123, 128–148, 164–184, 202–222, 247–267, 303–323, and 342–362; these read ILPI…IVWL, IAVI…HFVL, IGVF…LMAG, AAQS…ISLL, FFGW…ISSL, YSGI…LVSS, TMGI…SITI, and FLLP…LVSL.

It belongs to the complex I subunit 1 family. In terms of assembly, NDH is composed of at least 16 different subunits, 5 of which are encoded in the nucleus.

It localises to the plastid. It is found in the chloroplast thylakoid membrane. The enzyme catalyses a plastoquinone + NADH + (n+1) H(+)(in) = a plastoquinol + NAD(+) + n H(+)(out). It carries out the reaction a plastoquinone + NADPH + (n+1) H(+)(in) = a plastoquinol + NADP(+) + n H(+)(out). In terms of biological role, NDH shuttles electrons from NAD(P)H:plastoquinone, via FMN and iron-sulfur (Fe-S) centers, to quinones in the photosynthetic chain and possibly in a chloroplast respiratory chain. The immediate electron acceptor for the enzyme in this species is believed to be plastoquinone. Couples the redox reaction to proton translocation, and thus conserves the redox energy in a proton gradient. This Hordeum vulgare (Barley) protein is NAD(P)H-quinone oxidoreductase subunit 1, chloroplastic.